A 474-amino-acid polypeptide reads, in one-letter code: Glutathione synthetase (474 aa).

The residue at position 2 (A2) is an N-acetylalanine. R125 provides a ligand contact to substrate. Residue E144 participates in ATP binding. Mg(2+) is bound by residues E144 and N146. Residues 148-151 (ISAS), 214-216 (ERN), Q220, and 267-270 (RDGY) contribute to the substrate site. ATP-binding positions include K305, 364–373 (KPQREGGGNN), Y375, and 398–401 (MEKT). A Mg(2+)-binding site is contributed by E368. S415 bears the Phosphoserine mark. E425 serves as a coordination point for ATP. Position 450 (R450) interacts with substrate. ATP is bound by residues K452 and D458. 461 to 462 (VA) is a binding site for substrate.

It belongs to the eukaryotic GSH synthase family. As to quaternary structure, homodimer. Mg(2+) serves as cofactor.

The enzyme catalyses gamma-L-glutamyl-L-cysteine + glycine + ATP = glutathione + ADP + phosphate + H(+). Its pathway is sulfur metabolism; glutathione biosynthesis; glutathione from L-cysteine and L-glutamate: step 2/2. Its function is as follows. Catalyzes the production of glutathione from gamma-glutamylcysteine and glycine in an ATP-dependent manner. Glutathione (gamma-glutamylcysteinylglycine, GSH) is the most abundant intracellular thiol in living aerobic cells and is required for numerous processes including the protection of cells against oxidative damage, amino acid transport, the detoxification of foreign compounds, the maintenance of protein sulfhydryl groups in a reduced state and acts as a cofactor for a number of enzymes. This chain is Glutathione synthetase (GSS), found in Macaca fascicularis (Crab-eating macaque).